The chain runs to 344 residues: Inositol 2-dehydrogenase/D-chiro-inositol 3-dehydrogenase (344 aa).

It belongs to the Gfo/Idh/MocA family. Homotetramer.

The enzyme catalyses myo-inositol + NAD(+) = scyllo-inosose + NADH + H(+). It carries out the reaction 1D-chiro-inositol + NAD(+) = scyllo-inosine + NADH + H(+). The protein operates within polyol metabolism; myo-inositol degradation into acetyl-CoA; acetyl-CoA from myo-inositol: step 1/7. Its function is as follows. Involved in the oxidation of myo-inositol (MI) and D-chiro-inositol (DCI) to 2-keto-myo-inositol (2KMI or 2-inosose) and 1-keto-D-chiro-inositol (1KDCI), respectively. The sequence is that of Inositol 2-dehydrogenase/D-chiro-inositol 3-dehydrogenase from Bacillus licheniformis (strain ATCC 14580 / DSM 13 / JCM 2505 / CCUG 7422 / NBRC 12200 / NCIMB 9375 / NCTC 10341 / NRRL NRS-1264 / Gibson 46).